We begin with the raw amino-acid sequence, 527 residues long: MHSTNLLLEEPIRMASILEPSKPSFFPAMTKIVGTLGPKSRAVDTISSCLKAGMSVARFDFSWGDAEYHQETLENLKLAIKSTKKLCAVMLDTVGPELQVVNKSEAAISLEANGTVVLTPDQGQEASSELLPINFSGLAKALKPGATIFVGQYLFTGSETTSVWLEVSEVKGDDVVCVIKNSATLAGSLFTLHCSQIHIDLPTLSDEDKEVIRRWGAPNKIDFLSLSYTRHAEDVRQAREFLSKLGDLSQTQIFAKIENVEGLNHFDEILQEADGIILSRGNLGIDLPPEKVFLFQKSALHKCNMAGKPAVVTRVVDSMTDNLRPTRAEATDVANAVLDGSDAILLGAETLRGLYPVETISIVGKICAEAEKVFNQDLYFKRTVKYVGEPMTHLESIASSAVRAAIKVKASVIICFTSSGRAARLIAKYRPTMPVLSVVIPRLKTNQLRWSFTGAFEARQSLIVRGLFPMLADPRHPAESTSATNESVLKVALDHGKASGVIKSHDRVVVCQKVGDSSVVKIIELDD.

Position 58 (R58) interacts with substrate. K(+) is bound by residues D60, S62, D92, and T93. 60 to 63 (DFSW) lines the ATP pocket. K256 contacts substrate. Residue E258 participates in Mg(2+) binding. The substrate site is built by G281, N282, and T313. N282 serves as a coordination point for Mg(2+).

Belongs to the pyruvate kinase family. As to quaternary structure, homotetramer. Requires Mg(2+) as cofactor. The cofactor is K(+).

The protein resides in the cytoplasm. The protein localises to the cytosol. The enzyme catalyses pyruvate + ATP = phosphoenolpyruvate + ADP + H(+). It functions in the pathway carbohydrate degradation; glycolysis; pyruvate from D-glyceraldehyde 3-phosphate: step 5/5. In terms of biological role, key regulatory enzyme of the glycolytic pathway that catalyzes the final step of glycolysis, converting ADP and phosphoenolpyruvate (PEP) to ATP and pyruvate by essentially irreversible transphosphorylation. Is critical for plant growth and development. The protein is Pyruvate kinase 1, cytosolic of Oryza sativa subsp. indica (Rice).